Consider the following 631-residue polypeptide: MDSNPLHHSNPPVGSLPLDKVASLPSSPGVYQFKNAQGRVIYIGKAKNLRNRVRSYFRNPQQLFGKTLVMVGKIADIEVIITSSEVEALILENNLIKELKPRYNVNLKDDKTYPYLVITNEPFPRILVTRQVKKDGSTWFGPYTEARQLRSILDFIGSIFPIRSCKLRLSPENISRGKFKVCLDYHIHKCKGPCEGLLTEEEYLLMIVEITRLLKGKTSATIRSLNERMLSFAKELKFEQAAELKTQIDSLKRYAERQKVVTSDTLDRDVFAVASRNDDGCGVVFKIREGKLLGSERLYMNNTEGVSVQDLLARVVERYYLETCNLLPDEIFLQTELPAEEKETLENLLISKISAEGKQKRTIRLTVPIIGEKAHLIQLCRENARHHLEEYLIQKQKRGEALREHSGLIALAELLHLPKTPNRIECFDNSHFHGTDYVSSMVAFVHGKAKKSDYRKFKLKTVQGSDDYAAMHEVLTRRYSGTLSVELPLPDLIVVDGGKGQLSTAVKVLVSLKLDIPVIGLAKRIEEIFTPHTSDPFNLPKTSPALKLIQQLRDEAHRFAVTYHRKLRTERTLETELTTIQGIGEKTAQKLLRHFGSVDLIRTAGVDELRAAAGNKTAALLYRFYHPLEEG.

Positions serine 26–valine 105 constitute a GIY-YIG domain. Residues serine 219–tyrosine 254 form the UVR domain.

The protein belongs to the UvrC family. Interacts with UvrB in an incision complex.

The protein localises to the cytoplasm. Functionally, the UvrABC repair system catalyzes the recognition and processing of DNA lesions. UvrC both incises the 5' and 3' sides of the lesion. The N-terminal half is responsible for the 3' incision and the C-terminal half is responsible for the 5' incision. This Chlorobium phaeobacteroides (strain DSM 266 / SMG 266 / 2430) protein is UvrABC system protein C.